We begin with the raw amino-acid sequence, 295 residues long: Protein PAR32 (295 aa).

Alanine 2 is subject to N-acetylalanine. A phosphoserine mark is found at serine 36, serine 39, serine 47, serine 123, serine 138, serine 141, and serine 147. Over residues 134–153 the composition is skewed to polar residues; the sequence is SATRSHQSLHATTSSPNNNA. Disordered regions lie at residues 134-156 and 217-295; these read SATRSHQSLHATTSSPNNNAPIV and TSKK…TMFN. The segment covering 217–227 has biased composition (basic residues); it reads TSKKPKNKLKG. Serine 246 bears the Phosphoserine mark. The segment covering 246 to 256 has biased composition (polar residues); it reads SPKSSRNTINH. The segment covering 265 to 274 has biased composition (basic and acidic residues); it reads KFNLKDDNGK. A compositionally biased stretch (basic residues) spans 275-284; that stretch reads EKKKKKKKKS. A compositionally biased stretch (low complexity) spans 285-295; that stretch reads GFFSSLKTMFN.

Post-translationally, hyperphosphorylated after treatment with rapamycin in a TAP42-dependent manner.

Its subcellular location is the cytoplasm. Functionally, involved in resistance to cisplatin. This is Protein PAR32 (PAR32) from Saccharomyces cerevisiae (strain ATCC 204508 / S288c) (Baker's yeast).